Here is a 122-residue protein sequence, read N- to C-terminus: Seripauperin-5 (122 aa).

A helical transmembrane segment spans residues isoleucine 7–threonine 24.

It belongs to the SRP1/TIP1 family. Seripauperin subfamily.

The protein localises to the membrane. The protein is Seripauperin-5 (PAU5) of Saccharomyces cerevisiae (strain ATCC 204508 / S288c) (Baker's yeast).